Consider the following 1083-residue polypeptide: Chitin synthase 2 (1083 aa).

Basic and acidic residues-rich tracts occupy residues 1–10 (MSSEREERTF) and 18–30 (DDVR…ENQE). 2 disordered regions span residues 1–248 (MSSE…IADD) and 260–294 (DDDV…TLNE). N-linked (GlcNAc...) asparagine glycosylation occurs at Asn23. Polar residues-rich tracts occupy residues 38 to 49 (SYASSMAESQTL) and 61 to 70 (AKLQNKNRTS). Asn67 carries an N-linked (GlcNAc...) asparagine glycan. Basic and acidic residues-rich tracts occupy residues 78-100 (LPRD…KEQQ) and 117-128 (RLRDVNSHDKLP). Composition is skewed to polar residues over residues 132–148 (SPRN…SRSG), 177–191 (RPWT…FTRS), and 282–292 (SYMSSESQDTL). Asn417 is a glycosylation site (N-linked (GlcNAc...) asparagine). Transmembrane regions (helical) follow at residues 708–728 (WLNG…QIWF), 747–767 (FIQL…FYFV), 785–805 (TVIF…QFIL), 820–840 (ISMI…FYII), 860–880 (NMIV…ILYL), 889–909 (SAQY…YAFC), 987–1007 (YLVL…SEIY), and 1020–1040 (FLLW…TTFA).

This sequence belongs to the chitin synthase family. Class II subfamily.

Its subcellular location is the cell membrane. It catalyses the reaction [(1-&gt;4)-N-acetyl-beta-D-glucosaminyl](n) + UDP-N-acetyl-alpha-D-glucosamine = [(1-&gt;4)-N-acetyl-beta-D-glucosaminyl](n+1) + UDP + H(+). Its function is as follows. Polymerizes chitin, a structural polymer of the cell wall and septum, by transferring the sugar moiety of UDP-GlcNAc to the non-reducing end of the growing chitin polymer. Plays a critical role in cell wall integrity and virulence. The protein is Chitin synthase 2 of Fusarium oxysporum f. sp. lycopersici (strain 4287 / CBS 123668 / FGSC 9935 / NRRL 34936) (Fusarium vascular wilt of tomato).